Consider the following 1026-residue polypeptide: Maternal effect protein staufen (1026 aa).

Residues 16-29 (AAHHHSHSHAHMHL) show a composition bias toward basic residues. Disordered stretches follow at residues 16-159 (AAHH…QLPP), 190-210 (NHYG…SNYA), and 234-311 (TPVP…KDKT). Residues 70-111 (AQQQQQQQTSSNQAGAVAAAGAAYHHGNINSNSGSNISSNSN) are compositionally biased toward low complexity. The span at 112–126 (QMQKIRQQHQHLSSS) shows a compositional bias: polar residues. Composition is skewed to low complexity over residues 192-210 (YGSN…SNYA) and 234-256 (TPVP…NSTV). Residues 267 to 284 (TSQKPETRQEPASADDHV) show a composition bias toward basic and acidic residues. Residues 285–303 (STGNIDATGALSNEDTSSS) are compositionally biased toward polar residues. 2 DRBM domains span residues 311–378 (TPMC…ETMY) and 490–557 (PKFP…VLKT). Residues serine 563 and serine 570 each carry the phosphoserine modification. Residues 578–645 (SPISQVHEIG…AEKMLVELQK (68 aa)) enclose the DRBM 3 domain. 5 residues coordinate RNA: histidine 606, lysine 608, lysine 628, lysine 629, and lysine 632. A disordered region spans residues 647 to 707 (PPLTPTKQTP…PPKDKLIDMD (61 aa)). Phosphothreonine occurs at positions 650 and 655. Serine 676 carries the phosphoserine modification. Residues 678 to 688 (VSGTDGPTQTG) are compositionally biased toward polar residues. Residues 711-781 (NPITKLIQLQ…AQALFELLEA (71 aa)) form the DRBM 4 domain. Residues 855–948 (ESKEEEANKE…SNSTSNTQSA (94 aa)) form a disordered region. Positions 864–890 (EVAVAAEENSNNSANSGDSSNSSSGDS) are enriched in low complexity. Residues 891 to 901 (QATEAASESAL) are compositionally biased toward polar residues. Low complexity-rich tracts occupy residues 902-920 (NTST…SNVG) and 934-947 (NTES…NTQS). The region spanning 951 to 1018 (HMKEQLLYLS…ASNALKILSK (68 aa)) is the DRBM 5 domain.

Component of neuronal ribonucleoprotein complexes (RNPs) that contains at least various translational repressor and mRNA turnover proteins such as me31B, tral, Upf1, AGO2 and sometimes Fmr1. In terms of tissue distribution, polar granules at the posterior pole of the oocyte, and by the time the egg is laid, at the anterior pole.

The protein localises to the cytoplasm. It is found in the cytoplasmic ribonucleoprotein granule. RNA-binding protein which forms ribonucleoprotein complexes (RNPs) that play critical roles in the localization, translational repression and turnover of RNAs during embryogenesis, neurotransmission and neurogenesis. In the oocyte, essential for the localization of both the osk/oskar mRNA to the posterior pole and bcd/bicoid RNA to the anterior pole, and is therefore required for the correct anterior-posterior patterning of the developing embryo. Association with osk or bcd at their respective poles, appears to promote the formation and stabilization of the ribonucleoprotein complexes. Integral component of diverse neuritic ribonucleoprotein complexes (RNPs) that mediate the transport, translation and turnover of neuronal RNAs during neuorgenesis and the translation repression of synaptic transcripts in preparation for their dendritic targeting. The chain is Maternal effect protein staufen (stau) from Drosophila melanogaster (Fruit fly).